The primary structure comprises 254 residues: MAAYKLVLIRHGESTWNLENRFSCWYDADLSPAGHEEAKRGGQALRDAGYEFDICLTSVQKRVIRTLWTVLDAIDQMWLPVVRTWRLNERHYGGLTALNKAETAAKHGEAQVKIWRRSYDVPPPPMEPDHPFYSNISKDRRYADLTEDQLPSYESPKDTIARALPFWNEEIVPQIKEGKRVLIAAHGNSLQGIAKHVEGLSEEAIMELNLPTGIPIVYELDKNLKPIKPMQFLGDEETVCKAMEAVAAQGKAKK.

Residues 10–17 (RHGESTWN) and 23–24 (SC) each bind substrate. The active-site Tele-phosphohistidine intermediate is histidine 11. A phosphoserine mark is found at serine 14 and serine 23. At tyrosine 26 the chain carries Phosphotyrosine. Serine 31 is modified (phosphoserine). Substrate contacts are provided by residues arginine 62, 89–92 (ERHY), and lysine 100. Residue glutamate 89 is the Proton donor/acceptor of the active site. At lysine 106 the chain carries N6-acetyllysine. 116 to 117 (RR) contacts substrate. A Phosphoserine modification is found at serine 118. 187–188 (GN) contacts substrate. Residue lysine 251 is modified to N6-acetyllysine; alternate. Residue lysine 251 is modified to N6-succinyllysine; alternate. 2 positions are modified to N6-acetyllysine: lysine 253 and lysine 254.

It belongs to the phosphoglycerate mutase family. BPG-dependent PGAM subfamily.

It carries out the reaction (2R)-2-phosphoglycerate = (2R)-3-phosphoglycerate. It catalyses the reaction (2R)-3-phospho-glyceroyl phosphate = (2R)-2,3-bisphosphoglycerate + H(+). The protein is Probable phosphoglycerate mutase 4 (PGAM4) of Pan troglodytes (Chimpanzee).